The sequence spans 62 residues: UPF0291 protein CLK_1994 (62 aa).

The protein belongs to the UPF0291 family.

It is found in the cytoplasm. This Clostridium botulinum (strain Loch Maree / Type A3) protein is UPF0291 protein CLK_1994.